The primary structure comprises 256 residues: Ribonuclease HII (256 aa).

The RNase H type-2 domain maps to 72–256; that stretch reads QYIAGMDEVG…SFNPVPKYLN (185 aa). A divalent metal cation contacts are provided by Asp-78, Glu-79, and Asp-170.

Belongs to the RNase HII family. Mn(2+) serves as cofactor. Requires Mg(2+) as cofactor.

The protein localises to the cytoplasm. It carries out the reaction Endonucleolytic cleavage to 5'-phosphomonoester.. Functionally, endonuclease that specifically degrades the RNA of RNA-DNA hybrids. The protein is Ribonuclease HII of Limosilactobacillus reuteri (strain DSM 20016) (Lactobacillus reuteri).